The following is a 767-amino-acid chain: Receptor-type tyrosine-protein phosphatase-like ida-1 (767 aa).

The first 19 residues, 1–19, serve as a signal peptide directing secretion; sequence MRFFHSIIVLLFSISTGSA. Over 20-398 the chain is Lumenal; it reads FLLYGCNLSE…SLPVESSERD (379 aa). N-linked (GlcNAc...) asparagine glycans are attached at residues Asn26 and Asn146. Residues 399–419 form a helical membrane-spanning segment; the sequence is WLLMPVLFVCAFTVTALGLVA. Residues 420 to 767 lie on the Cytoplasmic side of the membrane; sequence AVQIARSRRH…NHLLKSIATK (348 aa). The region spanning 527–756 is the Tyrosine-protein phosphatase domain; the sequence is SQNRTILPFD…KLVYGCVAQE (230 aa).

Belongs to the protein-tyrosine phosphatase family. Receptor class 8 subfamily. Post-translationally, proteolytically cleaved probably at a dibasic consensus sequence by egl-3. In terms of tissue distribution, in hermaphrodites specifically expressed in neurons and in particular in the head nerve ring (ADE, ALA, ASI, ASK, AUA, ASG, AVH and AVJ neurons), in the ventral nerve cord, pre-anal ganglia (PVP neuron), in the tail (PHA, PHB and PHC neurons) and in vulval motor neurons VC and HSN and the vulval uv1 cells. In males, also expressed in neurons anterior to the nerve ring and male-specific neurons in the tail.

It is found in the cytoplasmic vesicle membrane. The protein resides in the perikaryon. It localises to the cell projection. The protein localises to the axon. Its subcellular location is the dendrite. Regulates dense-core vesicle (DCV) trafficking and/or secretion. Probably by controlling DCV trafficking, plays a role in the AVG neuron-mediated formation of the right axon tract of the ventral nerve cord. Involved in locomotion by regulating acetylcholine release. Probably by controlling the secretion of FLP neuropeptides, regulates the turning step of male mating behavior. Plays a role in preventing dauer formation. This chain is Receptor-type tyrosine-protein phosphatase-like ida-1, found in Caenorhabditis elegans.